Consider the following 182-residue polypeptide: Orotate phosphoribosyltransferase (182 aa).

5-phospho-alpha-D-ribose 1-diphosphate-binding positions include arginine 96, lysine 97, lysine 100, histidine 102, and 122–130 (EDTSTTGGS). Orotate is bound by residues threonine 126 and arginine 154.

The protein belongs to the purine/pyrimidine phosphoribosyltransferase family. PyrE subfamily. In terms of assembly, homodimer. Requires Mg(2+) as cofactor.

The catalysed reaction is orotidine 5'-phosphate + diphosphate = orotate + 5-phospho-alpha-D-ribose 1-diphosphate. The protein operates within pyrimidine metabolism; UMP biosynthesis via de novo pathway; UMP from orotate: step 1/2. Catalyzes the transfer of a ribosyl phosphate group from 5-phosphoribose 1-diphosphate to orotate, leading to the formation of orotidine monophosphate (OMP). The polypeptide is Orotate phosphoribosyltransferase (Streptomyces coelicolor (strain ATCC BAA-471 / A3(2) / M145)).